Consider the following 350-residue polypeptide: Deoxyhypusine synthase-like protein (350 aa).

It belongs to the deoxyhypusine synthase family.

This Chlorobaculum parvum (strain DSM 263 / NCIMB 8327) (Chlorobium vibrioforme subsp. thiosulfatophilum) protein is Deoxyhypusine synthase-like protein.